The following is a 466-amino-acid chain: Zinc finger and SCAN domain-containing protein 26 (466 aa).

A Glycyl lysine isopeptide (Lys-Gly) (interchain with G-Cter in SUMO2) cross-link involves residue Lys-21. The SCAN box domain occupies 42–124 (CKQFRQLRYE…GILEDLQLDR (83 aa)). Basic and acidic residues-rich tracts occupy residues 124–135 (RGKAGEQKDSAQ) and 163–173 (KPEERGKETRS). The tract at residues 124-182 (RGKAGEQKDSAQRSRPTVLVGEPAPRREAREQPGCALPQKPEERGKETRSENGNLIAGT) is disordered. The C2H2-type 1; degenerate zinc-finger motif lies at 220–242 (SQCLETKERLVQNSGLIEHDRAH). C2H2-type zinc fingers lie at residues 270-292 (HPCQECGKVFQRSSHLIRHQKIH), 298-320 (YQCKECGKVFSQNAGLLEHLRIH), 326-348 (YLCIHCGKNFRRSSHLNRHQKIH), 354-376 (RECKECGKTFSRALLLTHHQRVH), 382-404 (HHCNECGKAFSLTSDLIRHHRIH), 410-432 (FKCNVCQKAFRLNSHLDQHVRIH), and 438-460 (YKCSECNEAFRQKSGLFQHQRHH).

The protein resides in the nucleus. May be involved in transcriptional regulation. This chain is Zinc finger and SCAN domain-containing protein 26 (Zscan26), found in Mus musculus (Mouse).